Consider the following 4644-residue polypeptide: Cytoplasmic dynein 1 heavy chain 1 (4644 aa).

An N-acetylserine modification is found at serine 2. The interval 2 to 1865 (SEPGGGEDGS…SIQMANAKFN (1864 aa)) is stem. Coiled coils occupy residues 48–69 (AALEAALEEKSALEQMRKFLSD), 179–200 (SVEKKIAELEMGLLHLQQNIEI), 453–476 (AHRKLQARLDQMRKFRRQHEQLRA), and 541–564 (TEAWEAAMKRYDERIDRVETRITA). Serine 68 bears the Phosphoserine mark. The segment at 446–701 (MVWRINPAHR…NTQEIFDDWA (256 aa)) is interaction with DYNC1I2. The interaction with DYNC1LI2 stretch occupies residues 649–800 (AKQIDRQLTA…EKVEERNTIS (152 aa)). Lysine 1123 carries the N6-acetyllysine modification. Residues 1169 to 1201 (TYVQSLKRKIKQFEKQVELYRNGQRLLEKQRFQ) adopt a coiled-coil conformation. Serine 1228 is modified (phosphoserine). Coiled coils occupy residues 1229 to 1250 (AIQQQVANLQMKIVQEDRAVES) and 1355 to 1371 (RKLRQNLDGLLNQLKNF). 4 AAA regions span residues 1866-2097 (YGFE…VLVS), 2178-2450 (EELK…LTRL), 2554-2803 (EVET…WVRG), and 2897-3166 (VFYE…GGRT). Residues 1904 to 1911 (GPAGTGKT) and 2222 to 2229 (GPSGSGKS) each bind ATP. The tract at residues 2388 to 2408 (GEDEAQRRRKGKEDEGEEAAS) is disordered. ATP is bound by residues 2593-2600 (GPPGSGKT) and 2935-2942 (GVSGAGKT). Coiled-coil stretches lie at residues 3187-3273 (EKRS…ADKQ), 3394-3498 (AIAQ…KNQM), and 3735-3798 (EFQL…VSQQ). Positions 3187-3498 (EKRSELEEQQ…KTSETFKNQM (312 aa)) are stalk. Lysine 3478 carries the N6-acetyllysine modification. AAA stretches follow at residues 3551–3780 (LSNA…EVTR) and 4003–4219 (AHMF…TVDT). Position 4160 is a phosphoserine (serine 4160). Position 4281 is an N6-acetyllysine (lysine 4281). Threonine 4364 bears the Phosphothreonine mark. Residue serine 4366 is modified to Phosphoserine.

The protein belongs to the dynein heavy chain family. Homodimer. The cytoplasmic dynein 1 complex consists of two catalytic heavy chains (HCs) and a number of non-catalytic subunits presented by intermediate chains (ICs), light intermediate chains (LICs) and light chains (LCs); the composition seems to vary in respect to the IC, LIC and LC composition. The heavy chain homodimer serves as a scaffold for the probable homodimeric assembly of the respective non-catalytic subunits. The ICs and LICs bind directly to the HC dimer and dynein LCs assemble on the IC dimer. Interacts with DYNC1LI1; DYNC1LI1 and DYNC1LI2 bind mutually exclusive to DYNC1H1. Interacts with DYNC1LI2; DYNC1LI1 and DYNC1LI2 bind mutually exclusive to DYNC1H1. Interacts with DYNC1I2. Interacts with BICD2. Interacts with DNALI1.

It localises to the cytoplasm. The protein localises to the cytoskeleton. In terms of biological role, cytoplasmic dynein 1 acts as a motor for the intracellular retrograde motility of vesicles and organelles along microtubules. Dynein has ATPase activity; the force-producing power stroke is thought to occur on release of ADP. Plays a role in mitotic spindle assembly and metaphase plate congression. This chain is Cytoplasmic dynein 1 heavy chain 1 (Dync1h1), found in Mus musculus (Mouse).